Consider the following 186-residue polypeptide: Transcription factor FapR (186 aa).

In terms of domain architecture, MaoC-like spans 98 to 168 (FTKTQIARGH…YVIEVNSYVR (71 aa)).

It belongs to the FapR family.

Transcriptional factor involved in regulation of membrane lipid biosynthesis by repressing genes involved in fatty acid and phospholipid metabolism. This chain is Transcription factor FapR, found in Staphylococcus haemolyticus (strain JCSC1435).